Consider the following 213-residue polypeptide: Transcription antitermination protein NusB (213 aa).

The protein belongs to the NusB family.

Involved in transcription antitermination. Required for transcription of ribosomal RNA (rRNA) genes. Binds specifically to the boxA antiterminator sequence of the ribosomal RNA (rrn) operons. This Nostoc punctiforme (strain ATCC 29133 / PCC 73102) protein is Transcription antitermination protein NusB.